The following is a 94-amino-acid chain: Integration host factor subunit beta (94 aa).

Belongs to the bacterial histone-like protein family. As to quaternary structure, heterodimer of an alpha and a beta chain.

In terms of biological role, this protein is one of the two subunits of integration host factor, a specific DNA-binding protein that functions in genetic recombination as well as in transcriptional and translational control. In Serratia proteamaculans (strain 568), this protein is Integration host factor subunit beta.